The primary structure comprises 168 residues: MLQPQETFSNPALRDEDKHLGNLWASKKSLYKNPAHLAQQQDPWSRLSSTPTATSRSRDTFFDSKIPKDDLDFRLATLYNHHTGAFKNKTEILLHQETIEDIQGTKIQFPGECFHAPSAPITSRTTIRHWINPKKESIHSIQGSIVSPHTAATNGGYSRKNDGGFFST.

Disordered stretches follow at residues 35 to 61 (AHLAQQQDPWSRLSSTPTATSRSRDTF) and 149 to 168 (HTAATNGGYSRKNDGGFFST). Positions 38–55 (AQQQDPWSRLSSTPTATS) are enriched in polar residues.

Microtubule inner protein component of sperm flagellar doublet microtubules. As to expression, predominantly expressed in nervous system tissues, such as the spinal cord, cerebrum, cerebellum, and sciatic nerve.

It localises to the cytoplasm. It is found in the cytoskeleton. The protein localises to the cilium axoneme. The protein resides in the flagellum axoneme. In terms of biological role, microtubule inner protein (MIP) part of the dynein-decorated doublet microtubules (DMTs) in cilia axoneme, which is required for motile cilia beating. May play an important role for the maintenance of myelin-axon integrity. May affect intracellular Ca(2+) homeostasis. The protein is Cilia- and flagella-associated protein 276 of Mus musculus (Mouse).